The chain runs to 298 residues: ATP phosphoribosyltransferase (298 aa).

It belongs to the ATP phosphoribosyltransferase family. Long subfamily. Mg(2+) serves as cofactor.

The protein resides in the cytoplasm. The catalysed reaction is 1-(5-phospho-beta-D-ribosyl)-ATP + diphosphate = 5-phospho-alpha-D-ribose 1-diphosphate + ATP. It functions in the pathway amino-acid biosynthesis; L-histidine biosynthesis; L-histidine from 5-phospho-alpha-D-ribose 1-diphosphate: step 1/9. Feedback inhibited by histidine. In terms of biological role, catalyzes the condensation of ATP and 5-phosphoribose 1-diphosphate to form N'-(5'-phosphoribosyl)-ATP (PR-ATP). Has a crucial role in the pathway because the rate of histidine biosynthesis seems to be controlled primarily by regulation of HisG enzymatic activity. The sequence is that of ATP phosphoribosyltransferase from Tolumonas auensis (strain DSM 9187 / NBRC 110442 / TA 4).